Here is a 92-residue protein sequence, read N- to C-terminus: uncharacterized protein (92 aa).

This is an uncharacterized protein from Pasteurella multocida (strain Pm70).